A 324-amino-acid chain; its full sequence is Putative exosome complex exonuclease RRP42 (324 aa).

It belongs to the RNase PH family. As to quaternary structure, component of the RNA exosome complex.

It localises to the nucleus. The protein localises to the nucleolus. It is found in the cytoplasm. Non-catalytic component of the RNA exosome complex which has 3'-&gt;5' exoribonuclease activity and participates in a multitude of cellular RNA processing and degradation events. The chain is Putative exosome complex exonuclease RRP42 (exosc7) from Dictyostelium discoideum (Social amoeba).